The following is a 185-amino-acid chain: Ribosome-recycling factor (185 aa).

The protein belongs to the RRF family.

The protein localises to the cytoplasm. In terms of biological role, responsible for the release of ribosomes from messenger RNA at the termination of protein biosynthesis. May increase the efficiency of translation by recycling ribosomes from one round of translation to another. In Nocardia farcinica (strain IFM 10152), this protein is Ribosome-recycling factor.